The primary structure comprises 314 residues: Olfactory receptor 1E2 (314 aa).

Residues 1–25 (MMGQNQTSISDFLLLGLPIQPEQQN) lie on the Extracellular side of the membrane. Asn5 is a glycosylation site (N-linked (GlcNAc...) asparagine). A helical membrane pass occupies residues 26–49 (LCYALFLAMYLTTLLGNLLIIVLI). Topologically, residues 50–57 (RLDSHLHT) are cytoplasmic. Residues 58–79 (PMYLFLSNLSFSDLCFSSVTIP) form a helical membrane-spanning segment. Over 80–100 (KLLQNMQNQDPSIPYADCLTQ) the chain is Extracellular. Cys97 and Cys189 are disulfide-bonded. A helical membrane pass occupies residues 101-120 (MHFFLLFGDLESFLLVAMAY). At 121–139 (DRYVAICFPLHYTAIMSPM) the chain is on the cytoplasmic side. A helical transmembrane segment spans residues 140 to 158 (LCLSVVALSWVLTTFHAML). The Extracellular segment spans residues 159–196 (HTLLMARLCFCADNVIPHFFCDMSALLKLACSDTRVNE). The chain crosses the membrane as a helical span at residues 197-219 (WVIFIMGGLIVVIPFLLILGSYA). Residues 220 to 236 (RIVSSILKVPSFKGICK) are Cytoplasmic-facing. A helical membrane pass occupies residues 237–260 (ALSTCGSHLSVVSLFYGTVIGLYL). At 261 to 272 (CPSANSSTLKDT) the chain is on the extracellular side. Asn265 carries an N-linked (GlcNAc...) asparagine glycan. A helical transmembrane segment spans residues 273-292 (VMAMMYTVVTPMLNPFIYSL). Residues 293 to 314 (RNRDMKGALERVICKRKNPFLL) lie on the Cytoplasmic side of the membrane.

It belongs to the G-protein coupled receptor 1 family.

It is found in the cell membrane. In terms of biological role, odorant receptor. The chain is Olfactory receptor 1E2 (OR1E2) from Pan troglodytes (Chimpanzee).